Reading from the N-terminus, the 125-residue chain is Photoactive yellow protein (125 aa).

In terms of domain architecture, PAS spans 23-86 (LNQLAFGAIQ…GRFKEGVANG (64 aa)). Residue Cys-69 is modified to S-(4-hydroxycinnamyl)cysteine.

Belongs to the photoactive yellow protein family. In terms of processing, the 4-hydroxycinnamic acid (p-coumaric acid) chromophore is covalently bound via a thioester linkage.

In terms of biological role, photoactive blue light protein. Probably functions as a photoreceptor for a negative phototaxis response. This chain is Photoactive yellow protein (pyp), found in Halochromatium salexigens (Chromatium salexigens).